The chain runs to 251 residues: MNLNSIPAFDDNYIWVLNDEAGRCLIVDPGDAEPVLNAIAANNWQPEAIFLTHHHHDHVGGVKELVEKFPQIVVYGPQETQDKGTTQVVKDGETAFVLGHEFSVIATPGHTLGHICYFSKPYLFCGDTLFSGGCGRLFEGTASQMYQSLNKLSALPDDTLVCCAHEYTLSNMKFALSILPHDLSINDYYRKVKELRAKNQITLPVILKNERQINVFLRTEDIDLINVINEETLLQQPEERFAWLRSKKDRF.

7 residues coordinate Zn(2+): H53, H55, D57, H58, H110, D127, and H165.

This sequence belongs to the metallo-beta-lactamase superfamily. Glyoxalase II family. In terms of assembly, monomer. The cofactor is Zn(2+).

The enzyme catalyses an S-(2-hydroxyacyl)glutathione + H2O = a 2-hydroxy carboxylate + glutathione + H(+). It functions in the pathway secondary metabolite metabolism; methylglyoxal degradation; (R)-lactate from methylglyoxal: step 2/2. Thiolesterase that catalyzes the hydrolysis of S-D-lactoyl-glutathione to form glutathione and D-lactic acid. This Shigella boydii serotype 18 (strain CDC 3083-94 / BS512) protein is Hydroxyacylglutathione hydrolase.